Here is a 546-residue protein sequence, read N- to C-terminus: Nicotinic acid-CoA ligase olcI (546 aa).

194 to 205 contacts AMP; that stretch reads MFSTSGTSGLPK. An AMP-binding region spans residues 445–523; that stretch reads EIEAVLLKDP…ESLPRTGIGK (79 aa).

It belongs to the ATP-dependent AMP-binding enzyme family.

It carries out the reaction nicotinate + ATP + CoA = nicotinyl-CoA + AMP + diphosphate. The protein operates within secondary metabolite biosynthesis; terpenoid biosynthesis. Its function is as follows. Nicotinic acid-CoA ligase; part of the gene cluster that mediates the biosynthesis of 15-deoxyoxalicine B. The first step of the pathway is the synthesis of nicotinyl-CoA from nicotinic acid by the nicotinic acid-CoA ligase olcI. Nicotinyl-CoA is then a substrate of polyketide synthase olcA to produce 4-hydroxy-6-(3-pyridinyl)-2H-pyran-2-one (HPPO) which is further prenylated by the polyprenyl transferase olcH to yield geranylgeranyl-HPPO. Geranylgeranyl pyrophosphate is provided by the cluster-specific geranylgeranyl pyrophosphate synthase olcC. The FAD-dependent monooxygenase olcE catalyzes the epoxidation of geranylgeranyl-HPPO and the terpene cyclase olcD catalyzes the cyclization of the terpenoid component, resulting in the formation of the tricyclic terpene moiety seen in predecaturin E. The cytochrome P450 monooxygenase then catalyzes the allylic oxidation of predecaturin E, which is followed by spirocylization with concomitant loss of one molecule of water to form decaturin E. Decaturin E is the substrate of the cytochrome P450 monooxygenase olcJ which hydroxylates it at the C-29 position to form decaturin F. The short-chain dehydrogenase/reductase olcF may catalyze the oxidation of decaturin F to generate the 29-hydroxyl-27-one intermediate, and subsequent hemiacetal formation probably leads to the formation of decaturin C. The dioxygenase olcK may be a peroxisomal enzyme that catalyzes the hydroxylation of decaturin C into decaturin A once decaturin C is shuttled into the peroxisome by the MFS transporter olcL. Finally the cytochrome P450 monooxygenase olcB catalyzes the oxidative rearrangement to yield 15-deoxyoxalicine B. In the absence of olcJ, decaturin E may be shunted to a pathway in which it is oxidized to a ketone, possibly by olcF, to form decaturin D, which undergoes further allylic oxidation to yield decaturin G. Moreover, in the absence of oclK or oclL, oclB can convert decaturin C into 15-deoxyoxalicine A. In Penicillium canescens, this protein is Nicotinic acid-CoA ligase olcI.